Here is a 96-residue protein sequence, read N- to C-terminus: Nucleoid-associated protein DR_0199 (96 aa).

Belongs to the YbaB/EbfC family. In terms of assembly, homodimer.

It is found in the cytoplasm. Its subcellular location is the nucleoid. Functionally, binds to DNA and alters its conformation. May be involved in regulation of gene expression, nucleoid organization and DNA protection. This is Nucleoid-associated protein DR_0199 from Deinococcus radiodurans (strain ATCC 13939 / DSM 20539 / JCM 16871 / CCUG 27074 / LMG 4051 / NBRC 15346 / NCIMB 9279 / VKM B-1422 / R1).